The primary structure comprises 251 residues: Proteasome subunit alpha type-4-like (251 aa).

The protein belongs to the peptidase T1A family. As to quaternary structure, the 26S proteasome consists of a 20S proteasome core and two 19S regulatory subunits. The 20S proteasome core is composed of 28 subunits that are arranged in four stacked rings, resulting in a barrel-shaped structure. The two end rings are each formed by seven alpha subunits, and the two central rings are each formed by seven beta subunits. The catalytic chamber with the active sites is on the inside of the barrel. As to expression, testis, prominent after meiosis II. After meiosis, predominantly localized to the haploid spermatid nuclei of the 64-cell cysts, remaining during the elongation and condensation of the spermatid nuclei. In mature, motile sperm, expression is seen exclusively in the sperm head.

It localises to the nucleus. The proteasome is a multicatalytic proteinase complex which is characterized by its ability to cleave peptides with Arg, Phe, Tyr, Leu, and Glu adjacent to the leaving group at neutral or slightly basic pH. The proteasome has an ATP-dependent proteolytic activity. This chain is Proteasome subunit alpha type-4-like (Prosalpha3T), found in Drosophila melanogaster (Fruit fly).